Here is a 478-residue protein sequence, read N- to C-terminus: Cysteine--tRNA ligase (478 aa).

Cysteine 29 is a binding site for Zn(2+). Positions 31–41 (PTVYDIPHIGN) match the 'HIGH' region motif. The Zn(2+) site is built by cysteine 216, histidine 241, and glutamate 245. The 'KMSKS' region motif lies at 274-278 (KMSKS). ATP is bound at residue lysine 277.

It belongs to the class-I aminoacyl-tRNA synthetase family. In terms of assembly, monomer. Zn(2+) is required as a cofactor.

It localises to the cytoplasm. The enzyme catalyses tRNA(Cys) + L-cysteine + ATP = L-cysteinyl-tRNA(Cys) + AMP + diphosphate. The polypeptide is Cysteine--tRNA ligase (Orientia tsutsugamushi (strain Ikeda) (Rickettsia tsutsugamushi)).